A 583-amino-acid chain; its full sequence is Trehalase (583 aa).

The first 23 residues, 1-23 (MPGRTWELCLLLLLGLGLGSQEA), serve as a signal peptide directing secretion. Residue asparagine 78 is glycosylated (N-linked (GlcNAc...) asparagine). Residues arginine 168, 175 to 176 (WD), asparagine 212, and 221 to 223 (RSQ) each bind substrate. N-linked (GlcNAc...) asparagine glycans are attached at residues asparagine 239 and asparagine 261. Substrate is bound by residues 286–288 (RPE) and glycine 319. Aspartate 321 (proton donor/acceptor) is an active-site residue. N-linked (GlcNAc...) asparagine glycosylation is present at asparagine 369. Glutamate 514 (proton donor/acceptor) is an active-site residue. Glutamate 529 serves as a coordination point for substrate. Serine 556 carries the GPI-anchor amidated serine lipid modification. Positions 557-583 (GAKLAFLEPHCLAATLLPSLLLSLLPW) are cleaved as a propeptide — removed in mature form.

Belongs to the glycosyl hydrolase 37 family. In terms of assembly, homodimer; disulfide-linked. As to expression, expressed in kidney, liver and small intestine. Also more weakly expressed in pancreas.

It localises to the cell membrane. The enzyme catalyses alpha,alpha-trehalose + H2O = alpha-D-glucose + beta-D-glucose. In terms of biological role, intestinal trehalase is probably involved in the hydrolysis of ingested trehalose. This Homo sapiens (Human) protein is Trehalase.